The sequence spans 343 residues: Phosphoribosylformylglycinamidine cyclo-ligase (343 aa).

It belongs to the AIR synthase family.

The protein resides in the cytoplasm. The enzyme catalyses 2-formamido-N(1)-(5-O-phospho-beta-D-ribosyl)acetamidine + ATP = 5-amino-1-(5-phospho-beta-D-ribosyl)imidazole + ADP + phosphate + H(+). The protein operates within purine metabolism; IMP biosynthesis via de novo pathway; 5-amino-1-(5-phospho-D-ribosyl)imidazole from N(2)-formyl-N(1)-(5-phospho-D-ribosyl)glycinamide: step 2/2. This chain is Phosphoribosylformylglycinamidine cyclo-ligase, found in Enterococcus faecalis (strain ATCC 700802 / V583).